We begin with the raw amino-acid sequence, 517 residues long: Crotonobetaine/carnitine--CoA ligase (517 aa).

This sequence belongs to the ATP-dependent AMP-binding enzyme family.

It carries out the reaction 4-(trimethylamino)butanoate + ATP + CoA = 4-(trimethylamino)butanoyl-CoA + AMP + diphosphate. It catalyses the reaction crotonobetaine + ATP + CoA = crotonobetainyl-CoA + AMP + diphosphate. The enzyme catalyses (R)-carnitine + ATP + CoA = (R)-carnitinyl-CoA + AMP + diphosphate. It functions in the pathway amine and polyamine metabolism; carnitine metabolism. Catalyzes the transfer of CoA to carnitine, generating the initial carnitinyl-CoA needed for the CaiB reaction cycle. Also has activity toward crotonobetaine and gamma-butyrobetaine. In Escherichia coli O127:H6 (strain E2348/69 / EPEC), this protein is Crotonobetaine/carnitine--CoA ligase.